The primary structure comprises 511 residues: 2,3-bisphosphoglycerate-independent phosphoglycerate mutase (511 aa).

Residue D12 coordinates Mn(2+). At Y36 the chain carries Phosphotyrosine. S62 lines the Mn(2+) pocket. The Phosphoserine intermediate role is filled by S62. Residues H123, 153-154 (RD), R185, R191, 261-264 (RPDR), and K336 each bind substrate. Mn(2+) is bound by residues D403, H407, D444, H445, and H462.

The protein belongs to the BPG-independent phosphoglycerate mutase family. In terms of assembly, monomer. Mn(2+) is required as a cofactor.

It carries out the reaction (2R)-2-phosphoglycerate = (2R)-3-phosphoglycerate. It functions in the pathway carbohydrate degradation; glycolysis; pyruvate from D-glyceraldehyde 3-phosphate: step 3/5. Its function is as follows. Catalyzes the interconversion of 2-phosphoglycerate and 3-phosphoglycerate. In Geobacillus kaustophilus (strain HTA426), this protein is 2,3-bisphosphoglycerate-independent phosphoglycerate mutase.